A 156-amino-acid polypeptide reads, in one-letter code: Small ribosomal subunit protein uS7 (156 aa).

Belongs to the universal ribosomal protein uS7 family. Part of the 30S ribosomal subunit. Contacts proteins S9 and S11.

Its function is as follows. One of the primary rRNA binding proteins, it binds directly to 16S rRNA where it nucleates assembly of the head domain of the 30S subunit. Is located at the subunit interface close to the decoding center, probably blocks exit of the E-site tRNA. The sequence is that of Small ribosomal subunit protein uS7 from Allorhizobium ampelinum (strain ATCC BAA-846 / DSM 112012 / S4) (Agrobacterium vitis (strain S4)).